The following is a 294-amino-acid chain: Phosphate acetyltransferase (294 aa).

This sequence belongs to the phosphate acetyltransferase and butyryltransferase family. In terms of assembly, homotetramer.

The protein resides in the cytoplasm. It carries out the reaction acetyl-CoA + phosphate = acetyl phosphate + CoA. The protein operates within metabolic intermediate biosynthesis; acetyl-CoA biosynthesis; acetyl-CoA from acetate: step 2/2. In addition to acetyl-CoA (100%), the enzyme accepts propionyl-CoA (60%) and butyryl-CoA (30%). In Thermotoga maritima (strain ATCC 43589 / DSM 3109 / JCM 10099 / NBRC 100826 / MSB8), this protein is Phosphate acetyltransferase (pta).